Here is a 405-residue protein sequence, read N- to C-terminus: Probable tRNA sulfurtransferase (405 aa).

The THUMP domain maps to T60 to L165. ATP is bound by residues M183 to L184, H208 to F209, R265, G287, and Q296.

Belongs to the ThiI family.

It is found in the cytoplasm. The catalysed reaction is [ThiI sulfur-carrier protein]-S-sulfanyl-L-cysteine + a uridine in tRNA + 2 reduced [2Fe-2S]-[ferredoxin] + ATP + H(+) = [ThiI sulfur-carrier protein]-L-cysteine + a 4-thiouridine in tRNA + 2 oxidized [2Fe-2S]-[ferredoxin] + AMP + diphosphate. The enzyme catalyses [ThiS sulfur-carrier protein]-C-terminal Gly-Gly-AMP + S-sulfanyl-L-cysteinyl-[cysteine desulfurase] + AH2 = [ThiS sulfur-carrier protein]-C-terminal-Gly-aminoethanethioate + L-cysteinyl-[cysteine desulfurase] + A + AMP + 2 H(+). It functions in the pathway cofactor biosynthesis; thiamine diphosphate biosynthesis. In terms of biological role, catalyzes the ATP-dependent transfer of a sulfur to tRNA to produce 4-thiouridine in position 8 of tRNAs, which functions as a near-UV photosensor. Also catalyzes the transfer of sulfur to the sulfur carrier protein ThiS, forming ThiS-thiocarboxylate. This is a step in the synthesis of thiazole, in the thiamine biosynthesis pathway. The sulfur is donated as persulfide by IscS. This Lactobacillus acidophilus (strain ATCC 700396 / NCK56 / N2 / NCFM) protein is Probable tRNA sulfurtransferase.